The chain runs to 567 residues: Geranylgeranyl transferase type-2 subunit alpha (567 aa).

6 PFTA repeats span residues 44-78 (LDES…QLET), 88-122 (LVKA…RLPE), 124-158 (NWAR…QAAV), 159-193 (APAE…QLHP), 207-241 (VLLR…RAEP), and 363-397 (VLQS…ALDP). At Ser98 the chain carries Phosphoserine. LRR repeat units follow at residues 442-463 (DVRV…EQLL), 464-486 (LVTH…AALR), 487-508 (CLEV…ANLP), 509-530 (RLRE…QTLA), and 534-555 (RLVF…RERL).

The protein belongs to the protein prenyltransferase subunit alpha family. As to quaternary structure, heterotrimer composed of RABGGTA, RABGGTB and CHM; within this trimer, RABGGTA and RABGGTB form the catalytic component B, while CHM (component A) mediates peptide substrate binding. The Rab GGTase dimer (RGGT) interacts with CHM (component A) prior to Rab protein binding; the association is stabilized by geranylgeranyl pyrophosphate (GGpp). The CHM:RGGT:Rab complex is destabilized by GGpp. Interacts with non-phosphorylated form of RAB8A; phosphorylation of RAB8A at 'Thr-72' disrupts this interaction.

The catalysed reaction is geranylgeranyl diphosphate + L-cysteinyl-[protein] = S-geranylgeranyl-L-cysteinyl-[protein] + diphosphate. Its activity is regulated as follows. The enzymatic reaction requires the aid of a Rab escort protein (also called component A), such as CHM. Its function is as follows. Catalyzes the transfer of a geranylgeranyl moiety from geranylgeranyl diphosphate to both cysteines of Rab proteins with the C-terminal sequence -XXCC, -XCXC and -CCXX, such as RAB1A, RAB3A, RAB5A and RAB7A. The chain is Geranylgeranyl transferase type-2 subunit alpha (Rabggta) from Mus musculus (Mouse).